The following is a 60-amino-acid chain: Cytotoxin 2a (60 aa).

4 disulfides stabilise this stretch: C3/C21, C14/C38, C42/C53, and C54/C59.

The protein belongs to the three-finger toxin family. Short-chain subfamily. Type IA cytotoxin sub-subfamily. Monomer in solution; Homodimer and oligomer in the presence of negatively charged lipids forming a pore with a size ranging between 20 and 30 Angstroms. Expressed by the venom gland.

The protein resides in the secreted. Its subcellular location is the target cell membrane. Functionally, shows cytolytic activity on many different cells by forming pore in lipid membranes. In vivo, increases heart rate or kills the animal by cardiac arrest. In addition, it binds to heparin with high affinity, interacts with Kv channel-interacting protein 1 (KCNIP1) in a calcium-independent manner, and binds to integrin alpha-V/beta-3 (ITGAV/ITGB3) with moderate affinity. Preferentially binds acidic phospholipids like phosphatidylserine, phosphatidic acid and phosphatidyl glycerol. Has hemolytic activity towards human erythrocytes (EC(50)=1.024 uM) and cytolytic activity towards various cell lines. The polypeptide is Cytotoxin 2a (Naja naja (Indian cobra)).